We begin with the raw amino-acid sequence, 548 residues long: 2-succinyl-5-enolpyruvyl-6-hydroxy-3-cyclohexene-1-carboxylate synthase (548 aa).

Belongs to the TPP enzyme family. MenD subfamily. Homodimer. Mg(2+) is required as a cofactor. The cofactor is Mn(2+). Thiamine diphosphate serves as cofactor.

It catalyses the reaction isochorismate + 2-oxoglutarate + H(+) = 5-enolpyruvoyl-6-hydroxy-2-succinyl-cyclohex-3-ene-1-carboxylate + CO2. It participates in quinol/quinone metabolism; 1,4-dihydroxy-2-naphthoate biosynthesis; 1,4-dihydroxy-2-naphthoate from chorismate: step 2/7. It functions in the pathway quinol/quinone metabolism; menaquinone biosynthesis. Catalyzes the thiamine diphosphate-dependent decarboxylation of 2-oxoglutarate and the subsequent addition of the resulting succinic semialdehyde-thiamine pyrophosphate anion to isochorismate to yield 2-succinyl-5-enolpyruvyl-6-hydroxy-3-cyclohexene-1-carboxylate (SEPHCHC). This Mycobacterium ulcerans (strain Agy99) protein is 2-succinyl-5-enolpyruvyl-6-hydroxy-3-cyclohexene-1-carboxylate synthase.